The primary structure comprises 403 residues: Alkaline protease 1 (403 aa).

The N-terminal stretch at M1–A21 is a signal peptide. Positions P22–T125 are excised as a propeptide. The region spanning K36–I120 is the Inhibitor I9 domain. Residues P130–A403 enclose the Peptidase S8 domain. Residues D162 and H193 each act as charge relay system in the active site. N-linked (GlcNAc...) asparagine glycans are attached at residues N253 and N307. The active-site Charge relay system is S349.

Belongs to the peptidase S8 family.

It localises to the secreted. The catalysed reaction is Hydrolysis of proteins with broad specificity, and of Bz-Arg-OEt &gt; Ac-Tyr-OEt. Does not hydrolyze peptide amides.. Functionally, secreted alkaline protease that allows assimilation of proteinaceous substrates. This Neosartorya fischeri (strain ATCC 1020 / DSM 3700 / CBS 544.65 / FGSC A1164 / JCM 1740 / NRRL 181 / WB 181) (Aspergillus fischerianus) protein is Alkaline protease 1 (alp1).